The primary structure comprises 326 residues: D-amino-acid oxidase (326 aa).

FAD is bound by residues G18, V19, T46, T47, S48, A52, A53, V162, and S179. 2 residues coordinate D-proline: Y222 and R277. Positions 222 and 277 each coordinate D-serine. Positions 277, 303, 304, 306, and 308 each coordinate FAD. G304 contributes to the D-proline binding site. G304 contributes to the D-serine binding site.

It belongs to the DAMOX/DASOX family. Monomer. The cofactor is FAD.

It is found in the cytoplasm. It localises to the secreted. Its subcellular location is the cell wall. It catalyses the reaction a D-alpha-amino acid + O2 + H2O = a 2-oxocarboxylate + H2O2 + NH4(+). It carries out the reaction D-valine + O2 + H2O = 3-methyl-2-oxobutanoate + H2O2 + NH4(+). The enzyme catalyses D-leucine + O2 + H2O = 4-methyl-2-oxopentanoate + H2O2 + NH4(+). The catalysed reaction is D-isoleucine + O2 + H2O = (R)-3-methyl-2-oxopentanoate + H2O2 + NH4(+). It catalyses the reaction D-tyrosine + O2 + H2O = 3-(4-hydroxyphenyl)pyruvate + H2O2 + NH4(+). It carries out the reaction D-threonine + O2 + H2O = (S)-3-hydroxy-2-oxobutanoate + H2O2 + NH4(+). With respect to regulation, inhibited by benzoate and phenylmethylsulfonyl fluoride (PMSF). Weakly inhibited by anthranilate, crotonate, and the amino acid-modifying agents dithionitrobenzoic acid and diethyl pyrocarbonate. Not inhibited by malonate, meso-tartrate, D-malate, or the amino acid-modifying agents iodoacetic acid or butane-2,3-dione. Functionally, catalyzes the oxidative deamination of D-amino acids with broad substrate specificity. This chain is D-amino-acid oxidase, found in Rubrobacter xylanophilus (strain DSM 9941 / JCM 11954 / NBRC 16129 / PRD-1).